The primary structure comprises 423 residues: tRNA(Ile2) 2-agmatinylcytidine synthetase TiaS (423 aa).

The segment at residues 273 to 347 (VIVYGRVVEE…GINIEKIKIL (75 aa)) is a DNA-binding region (OB).

It belongs to the TiaS family.

It is found in the cytoplasm. It catalyses the reaction cytidine(34) in tRNA(Ile2) + agmatine + ATP + H2O = 2-agmatinylcytidine(34) in tRNA(Ile2) + AMP + 2 phosphate + 2 H(+). In terms of biological role, ATP-dependent agmatine transferase that catalyzes the formation of 2-agmatinylcytidine (agm2C) at the wobble position (C34) of tRNA(Ile2), converting the codon specificity from AUG to AUA. The polypeptide is tRNA(Ile2) 2-agmatinylcytidine synthetase TiaS (Methanocaldococcus jannaschii (strain ATCC 43067 / DSM 2661 / JAL-1 / JCM 10045 / NBRC 100440) (Methanococcus jannaschii)).